A 435-amino-acid chain; its full sequence is NAD-specific glutamate dehydrogenase A (435 aa).

A disordered region spans residues 1 to 28 (MTMASKSDSTHDESGDEAADSTEPESAL). Acidic residues predominate over residues 14 to 23 (SGDEAADSTE). Residue lysine 126 is part of the active site.

The protein belongs to the Glu/Leu/Phe/Val dehydrogenases family. Homohexamer. The N-terminus is blocked.

It carries out the reaction L-glutamate + NAD(+) + H2O = 2-oxoglutarate + NH4(+) + NADH + H(+). With respect to regulation, inhibited by ethanol, acetone, acetonitrile and 2-propanol (65 to 70% inhibition) and to a lesser extent by methanol and dimethyl formamide (26 and 49 % inhibition respectively). No effect of glycerol or DMSO. This chain is NAD-specific glutamate dehydrogenase A (gdhX), found in Halobacterium salinarum (Halobacterium halobium).